A 110-amino-acid chain; its full sequence is uncharacterized protein (110 aa).

2 helical membrane passes run 21 to 41 (IQLA…PQIC) and 63 to 83 (PSMI…IIVV).

The protein localises to the membrane. This is an uncharacterized protein from Saccharomyces cerevisiae (strain ATCC 204508 / S288c) (Baker's yeast).